Consider the following 272-residue polypeptide: CD40 ligand (272 aa).

The Cytoplasmic segment spans residues 1–23; sequence MNEAYSPAAPRPMGSTSPSTMKM. Residues 24–44 form a helical; Signal-anchor for type II membrane protein membrane-spanning segment; the sequence is FMCFLSVFMVVQTIGTVLFCL. Residues 45-272 lie on the Extracellular side of the membrane; sequence YLHMKMDKME…GNTYFGMFKL (228 aa). Asn124 and Asn146 each carry an N-linked (GlcNAc...) asparagine glycan. In terms of domain architecture, THD spans 136-272; that stretch reads IATHLAGVKS…GNTYFGMFKL (137 aa). The cysteines at positions 190 and 229 are disulfide-linked. Asn251 is a glycosylation site (N-linked (GlcNAc...) asparagine).

This sequence belongs to the tumor necrosis factor family. As to quaternary structure, homotrimer. Interacts with CD28. CD40 ligand, soluble form: Exists as either a monomer or a homotrimer. Forms a ternary complex between CD40 and integrins for CD40-CD40LG signaling. The soluble form derives from the membrane form by proteolytic processing.

The protein localises to the cell membrane. It is found in the cell surface. The protein resides in the secreted. Cytokine that acts as a ligand to CD40/TNFRSF5. Costimulates T-cell proliferation and cytokine production. Induces the activation of NF-kappa-B. Mediates B-cell proliferation in the absence of co-stimulus as well as IgE production in the presence of IL4. Involved in immunoglobulin class switching. Its function is as follows. Acts as a ligand for integrins, specifically ITGA5:ITGB1 and ITGAV:ITGB3; both integrins and the CD40 receptor are required for activation of CD40-CD40LG signaling, which have cell-type dependent effects, such as B-cell activation, NF-kappa-B signaling and anti-apoptotic signaling. The sequence is that of CD40 ligand (CD40LG) from Gallus gallus (Chicken).